Reading from the N-terminus, the 485-residue chain is Programmed cell death protein 7 (485 aa).

The tract at residues 1–133 (MALPPFFGQG…EAPPPPADVL (133 aa)) is disordered. Residues 12-48 (PGPPPPQPPPPAPFGCPPPPLPSPAFPPPLPQRPGPF) are compositionally biased toward pro residues. Residues 49–71 (PGASAPFLQPPLALQPRASAEAS) show a composition bias toward low complexity. 2 stretches are compositionally biased toward pro residues: residues 82 to 96 (PVPP…PQCR) and 109 to 130 (PPPP…PPPA). 2 coiled-coil regions span residues 232 to 335 (VGEA…AAAR) and 362 to 411 (RSEL…ESKL).

As to quaternary structure, interacts with RBM40. Component of the U11/U12 snRNPs that are part of the U12-type spliceosome.

It is found in the nucleus. Functionally, promotes apoptosis when overexpressed. This Homo sapiens (Human) protein is Programmed cell death protein 7 (PDCD7).